The chain runs to 354 residues: S-adenosylmethionine:tRNA ribosyltransferase-isomerase (354 aa).

This sequence belongs to the QueA family. Monomer.

Its subcellular location is the cytoplasm. It carries out the reaction 7-aminomethyl-7-carbaguanosine(34) in tRNA + S-adenosyl-L-methionine = epoxyqueuosine(34) in tRNA + adenine + L-methionine + 2 H(+). Its pathway is tRNA modification; tRNA-queuosine biosynthesis. In terms of biological role, transfers and isomerizes the ribose moiety from AdoMet to the 7-aminomethyl group of 7-deazaguanine (preQ1-tRNA) to give epoxyqueuosine (oQ-tRNA). This is S-adenosylmethionine:tRNA ribosyltransferase-isomerase from Methylobacterium radiotolerans (strain ATCC 27329 / DSM 1819 / JCM 2831 / NBRC 15690 / NCIMB 10815 / 0-1).